Consider the following 428-residue polypeptide: Adenylosuccinate synthetase (428 aa).

Residues 12 to 18 (GDEGKGK) and 40 to 42 (GHT) contribute to the GTP site. Asp-13 acts as the Proton acceptor in catalysis. Mg(2+) is bound by residues Asp-13 and Gly-40. IMP-binding positions include 13–16 (DEGK), 38–41 (NAGH), Thr-130, Arg-144, Gln-225, Thr-240, and Arg-304. The active-site Proton donor is the His-41. Position 300-306 (300-306 (TTTGRPR)) interacts with substrate. Residues Arg-306, 332 to 334 (KLD), and 414 to 416 (SVG) each bind GTP.

The protein belongs to the adenylosuccinate synthetase family. Homodimer. It depends on Mg(2+) as a cofactor.

It is found in the cytoplasm. It carries out the reaction IMP + L-aspartate + GTP = N(6)-(1,2-dicarboxyethyl)-AMP + GDP + phosphate + 2 H(+). Its pathway is purine metabolism; AMP biosynthesis via de novo pathway; AMP from IMP: step 1/2. Plays an important role in the de novo pathway of purine nucleotide biosynthesis. Catalyzes the first committed step in the biosynthesis of AMP from IMP. In Caldanaerobacter subterraneus subsp. tengcongensis (strain DSM 15242 / JCM 11007 / NBRC 100824 / MB4) (Thermoanaerobacter tengcongensis), this protein is Adenylosuccinate synthetase.